The chain runs to 134 residues: Mini-ribonuclease 3 (134 aa).

Asp-22 is an active-site residue.

Belongs to the MrnC RNase family. Homodimer. Requires Mg(2+) as cofactor.

Its subcellular location is the cytoplasm. Its function is as follows. Involved in correct processing of both the 5' and 3' ends of 23S rRNA precursor. Processes 30S rRNA precursor transcript even in absence of ribonuclease 3 (Rnc); Rnc processes 30S rRNA into smaller rRNA precursors. This is Mini-ribonuclease 3 from Staphylococcus aureus (strain NCTC 8325 / PS 47).